The sequence spans 336 residues: Putative bifunctional cytochrome c-type biogenesis protein CcmAE (336 aa).

Positions 1–199 are cytochrome c biogenesis ATP-binding export protein CcmA 2; the sequence is MLEARDLYCE…ADTVRRLALT (199 aa). The 241-residue stretch at 2–242 folds into the ABC transporter domain; the sequence is LEARDLYCER…VGQRLRVGGM (241 aa). ATP is bound at residue 34-41; sequence GGNGAGKT. A cytochrome c-type biogenesis protein CcmE 2 region spans residues 196–336; the sequence is LALTTALVLY…PQRVDKDTSS (141 aa). Heme-binding residues include His307 and Tyr311. The tract at residues 307 to 336 is disordered; the sequence is HDENYTPPEVEKAMQENHRRPQRVDKDTSS.

It in the N-terminal section; belongs to the ABC transporter superfamily. CcmA exporter (TC 3.A.1.107) family. In the C-terminal section; belongs to the CcmE/CycJ family.

The protein localises to the cell inner membrane. It carries out the reaction heme b(in) + ATP + H2O = heme b(out) + ADP + phosphate + H(+). Its function is as follows. Part of the ABC transporter complex CcmAB involved in the biogenesis of c-type cytochromes; once thought to export heme, this seems not to be the case, but its exact role is uncertain. Responsible for energy coupling to the transport system. In terms of biological role, heme chaperone required for the biogenesis of c-type cytochromes. Transiently binds heme delivered by CcmC and transfers the heme to apo-cytochromes in a process facilitated by CcmF and CcmH. In Salmonella choleraesuis (strain SC-B67), this protein is Putative bifunctional cytochrome c-type biogenesis protein CcmAE (ccmAE).